A 779-amino-acid chain; its full sequence is Catalase-peroxidase (779 aa).

Positions 148-270 form a cross-link, tryptophyl-tyrosyl-methioninium (Trp-Tyr) (with M-296); sequence WHSAGTYRIT…LGAVQMGLIY (123 aa). H149 functions as the Proton acceptor in the catalytic mechanism. A cross-link (tryptophyl-tyrosyl-methioninium (Tyr-Met) (with W-148)) is located at residues 270–296; that stretch reads YVNPEGPNGKPDPIAAAKDIRETFFRM. Residue H311 participates in heme b binding.

Belongs to the peroxidase family. Peroxidase/catalase subfamily. In terms of assembly, homodimer or homotetramer. Requires heme b as cofactor. Formation of the three residue Trp-Tyr-Met cross-link is important for the catalase, but not the peroxidase activity of the enzyme.

The catalysed reaction is H2O2 + AH2 = A + 2 H2O. It catalyses the reaction 2 H2O2 = O2 + 2 H2O. Its function is as follows. Bifunctional enzyme with both catalase and broad-spectrum peroxidase activity. The sequence is that of Catalase-peroxidase from Bradyrhizobium diazoefficiens (strain JCM 10833 / BCRC 13528 / IAM 13628 / NBRC 14792 / USDA 110).